Consider the following 340-residue polypeptide: Tetraacyldisaccharide 4'-kinase (340 aa).

51–58 (HMGGAGKT) contacts ATP.

The protein belongs to the LpxK family.

It carries out the reaction a lipid A disaccharide + ATP = a lipid IVA + ADP + H(+). Its pathway is glycolipid biosynthesis; lipid IV(A) biosynthesis; lipid IV(A) from (3R)-3-hydroxytetradecanoyl-[acyl-carrier-protein] and UDP-N-acetyl-alpha-D-glucosamine: step 6/6. Functionally, transfers the gamma-phosphate of ATP to the 4'-position of a tetraacyldisaccharide 1-phosphate intermediate (termed DS-1-P) to form tetraacyldisaccharide 1,4'-bis-phosphate (lipid IVA). The sequence is that of Tetraacyldisaccharide 4'-kinase from Rhodopseudomonas palustris (strain ATCC BAA-98 / CGA009).